The chain runs to 735 residues: METPDYNTPQGGTPSAGSQRTVVEDDSSLIKAVQKGDVVRVQQLLEKGADANACEDTWGWTPLHNAVQAGRVDIVNLLLSHGADPHRRKKNGATPFIIAGIQGDVKLLEILLSCGADVNECDENGFTAFMEAAERGNAEALRFLFAKGANVNLRRQTTKDKRRLKQGGATALMSAAEKGHLEVLRILLNDMKAEVDARDNMGRNALIRTLLNWDCENVEEITSILIQHGADVNVRGERGKTPLIAAVERKHTGLVQMLLSREGINIDARDNEGKTALLIAVDKQLKEIVQLLLEKGADKCDDLVWIARRNHDYHLVKLLLPYVANPDTDPPAGDWSPHSSRWGTALKSLHSMTRPMIGKLKIFIHDDYKIAGTSEGAVYLGIYDNREVAVKVFRENSPRGCKEVSCLRDCGDHSNLVAFYGREDDKGCLYVCVSLCEWTLEEFLRLPREEPVENGEDKFAHSILLSIFEGVQKLHLHGYSHQDLQPQNILIDSKKAVRLADFDQSIRWMGESQMVRRDLEDLGRLVLYVVMKGEIPFETLKTQNDEVLLTMSPDEETKDLIHCLFSPGENVKNCLVDLLGHPFFWTWENRYRTLRNVGNESDIKVRKCKSDLLRLLQHQTLEPPRSFDQWTSKIDKNVMDEMNHFYEKRKKNPYQDTVGDLLKFIRNIGEHINEEKKRGMKEILGDPSRYFQETFPDLVIYIYKKLKETEYRKHFPQPPPRLSVPEAVGPGGIQS.

The disordered stretch occupies residues 1 to 21 (METPDYNTPQGGTPSAGSQRT). 9 ANK repeats span residues 24-53 (EDDS…DANA), 58-87 (WGWT…DPHR), 91-120 (NGAT…DVNE), 124-153 (NGFT…NVNL), 167-197 (GGAT…EVDA), 201-234 (MGRN…DVNV), 238-268 (RGKT…NIDA), 272-301 (EGKT…DKCD), and 303-328 (LVWI…NPDT). The tract at residues 26 to 51 (DSSLIKAVQKGDVVRVQQLLEKGADA) is binding to TMEV Leader protein. 2 2-5A binding (P-loop) regions span residues 229 to 242 (GADV…GKTP) and 253 to 275 (GLVQ…EGKT). One can recognise a Protein kinase domain in the interval 364-584 (IHDDYKIAGT…LVDLLGHPFF (221 aa)). Residues 401–436 (CKEVSCLRDCGDHSNLVAFYGREDDKGCLYVCVSLC) form a C6-type zinc finger. One can recognise a KEN domain in the interval 587-722 (WENRYRTLRN…KHFPQPPPRL (136 aa)). A disordered region spans residues 714 to 735 (HFPQPPPRLSVPEAVGPGGIQS).

The protein belongs to the protein kinase superfamily. (Microbial infection) Interacts (via N-terminus) with TMEV leader protein; this interaction prevents RNASEL activation by its substrate 2'-5' oligoadenylates. As to quaternary structure, monomer (inactive form) or homodimer. Interacts with ABCE1; this interaction inhibits the RNASEL. Requires Mn(2+) as cofactor. The cofactor is Mg(2+). In terms of tissue distribution, expressed in spleen, thymus, lung, testis, kidney, liver and heart.

It localises to the cytoplasm. It is found in the mitochondrion. After binding to 2-5A (5'-phosphorylated 2',5'-linked oligoadenylates) the homodimerization and subsequent activation occurs. Inhibited by RNASEL inhibitor ABCE1/RLI, a cytoplasmic member of the ATP-binding cassette (ABC) transporter family. Endoribonuclease that functions in the interferon (IFN) antiviral response. In INF treated and virus infected cells, RNASEL probably mediates its antiviral effects through a combination of direct cleavage of single-stranded viral RNAs, inhibition of protein synthesis through the degradation of rRNA, induction of apoptosis, and induction of other antiviral genes. RNASEL mediated apoptosis is the result of a JNK-dependent stress-response pathway leading to cytochrome c release from mitochondria and caspase-dependent apoptosis. Therefore, activation of RNASEL could lead to elimination of virus infected cells under some circumstances. In the crosstalk between autophagy and apoptosis proposed to induce autophagy as an early stress response to small double-stranded RNA and at later stages of prolonged stress to activate caspase-dependent proteolytic cleavage of BECN1 to terminate autophagy and promote apoptosis. Might play a central role in the regulation of mRNA turnover. Cleaves 3' of UpNp dimers, with preference for UU and UA sequences, to sets of discrete products ranging from between 4 and 22 nucleotides in length. The sequence is that of 2-5A-dependent ribonuclease (Rnasel) from Mus musculus (Mouse).